The primary structure comprises 186 residues: Ribosome-recycling factor (186 aa).

Belongs to the RRF family.

It is found in the cytoplasm. Its function is as follows. Responsible for the release of ribosomes from messenger RNA at the termination of protein biosynthesis. May increase the efficiency of translation by recycling ribosomes from one round of translation to another. The sequence is that of Ribosome-recycling factor from Maricaulis maris (strain MCS10) (Caulobacter maris).